A 387-amino-acid polypeptide reads, in one-letter code: Phosphoglycerate kinase (387 aa).

Substrate contacts are provided by residues 21 to 23 (DLN), Arg36, and 59 to 62 (HLGR). Lys84 carries the N6-acetyllysine modification. Substrate-binding residues include Arg113 and Arg146. ATP contacts are provided by residues Lys197, Glu314, and 340 to 343 (GGDT).

Belongs to the phosphoglycerate kinase family. As to quaternary structure, monomer.

The protein localises to the cytoplasm. It carries out the reaction (2R)-3-phosphoglycerate + ATP = (2R)-3-phospho-glyceroyl phosphate + ADP. The protein operates within carbohydrate degradation; glycolysis; pyruvate from D-glyceraldehyde 3-phosphate: step 2/5. The chain is Phosphoglycerate kinase from Shigella sonnei (strain Ss046).